The chain runs to 399 residues: MDTTFQAAIDTGKINGAVVCATDAQGHFVYNKATGERTLLSGEKQPQQLDDVLYLASATKLITTIAALQCVEDGLLSLDGDLSSIAPELAAKYVLTGFTDDESPLDDPPARPITLKMLLTHSSGTSYHFLDPSIAKWRAQYANPENEKPRLVEEMFTYPLSFQPGTGWMYGPGLDWAGRVVERVTGGTLMEFMQKRIFDPLGITDSQFYPVTREDLRARLVDLNPSDPGALGSAVIGGGGEMNLRGRGAFGGHGLFLTGLDFVKILRSLLANDGMLLKPAAVDNMFQQHLGPEAAASHRAALASPLGPFFRVGTDPETKVGYGLGGLLTLEDVDGWYGERTLTWGGGLTLTWFIDRKNNLCGVGAIQAVLPVDGDLMADLKQTFRHDIYRKYSAWKGQQ.

The active-site Nucleophile is serine 57. Active-site proton acceptor residues include lysine 60 and tyrosine 170.

This sequence belongs to the class-A beta-lactamase family.

It carries out the reaction lovastatin + H2O = monacolin J + (S)-2-methylbutanoate + H(+). It catalyses the reaction pravastatin lactone + H2O = pravastatin diol lactone + (S)-2-methylbutanoate + H(+). The catalysed reaction is mevastatin + H2O = compactin diol lactone + (S)-2-methylbutanoate + H(+). In terms of biological role, esterase that can hydrolyze the side chain of lovastatin to produce monacolin J. Is also able to hydrolyze the side chains of mevastatin and pravastatin, but not simvastatin. In Penicillium rubens (strain ATCC 28089 / DSM 1075 / NRRL 1951 / Wisconsin 54-1255) (Penicillium chrysogenum), this protein is Lovastatin esterase.